The chain runs to 232 residues: Ribose-5-phosphate isomerase A (232 aa).

Residues 31–34 (TGST), 87–90 (DGAD), and 100–103 (KGGG) each bind substrate. Glu-109 serves as the catalytic Proton acceptor. Lys-127 lines the substrate pocket.

It belongs to the ribose 5-phosphate isomerase family. Homodimer.

The catalysed reaction is aldehydo-D-ribose 5-phosphate = D-ribulose 5-phosphate. It functions in the pathway carbohydrate degradation; pentose phosphate pathway; D-ribose 5-phosphate from D-ribulose 5-phosphate (non-oxidative stage): step 1/1. Catalyzes the reversible conversion of ribose-5-phosphate to ribulose 5-phosphate. The polypeptide is Ribose-5-phosphate isomerase A (Bifidobacterium adolescentis (strain ATCC 15703 / DSM 20083 / NCTC 11814 / E194a)).